An 86-amino-acid chain; its full sequence is Small ribosomal subunit protein bS20 (86 aa).

Belongs to the bacterial ribosomal protein bS20 family.

Its function is as follows. Binds directly to 16S ribosomal RNA. This is Small ribosomal subunit protein bS20 from Bifidobacterium adolescentis (strain ATCC 15703 / DSM 20083 / NCTC 11814 / E194a).